The sequence spans 120 residues: Large ribosomal subunit protein bL19c (120 aa).

It belongs to the bacterial ribosomal protein bL19 family.

The protein localises to the plastid. The protein resides in the chloroplast. The protein is Large ribosomal subunit protein bL19c of Thalassiosira weissflogii (Marine diatom).